Consider the following 166-residue polypeptide: Endoribonuclease YbeY (166 aa).

Zn(2+) contacts are provided by H125, H129, and H135.

This sequence belongs to the endoribonuclease YbeY family. The cofactor is Zn(2+).

The protein localises to the cytoplasm. Its function is as follows. Single strand-specific metallo-endoribonuclease involved in late-stage 70S ribosome quality control and in maturation of the 3' terminus of the 16S rRNA. The protein is Endoribonuclease YbeY of Alkalilimnicola ehrlichii (strain ATCC BAA-1101 / DSM 17681 / MLHE-1).